We begin with the raw amino-acid sequence, 213 residues long: MSFNIDEWEPKTKMGKLVKEGTITDIDEIFEKGLPIMELEIVDALVPDLEEEVMDVNLVQRMHKSGRKVNFRVIVAVGNKNGYVGLGQGKAKEVGPAIRKAVDNAKYNLIKVRRGCGDWGCVCGKEHTVPFKVQGKASSVSVSLMPAPAGVGLVVGDVGKTILNLAGIKDVWSQSFGQTQTTVNFANAIFDALKTLSAVKASEADLKKMGVKY.

The S5 DRBM domain occupies Leu-49–Val-112.

This sequence belongs to the universal ribosomal protein uS5 family. Part of the 30S ribosomal subunit. Contacts protein S4.

Its function is as follows. With S4 and S12 plays an important role in translational accuracy. The sequence is that of Small ribosomal subunit protein uS5 from Methanobrevibacter smithii (strain ATCC 35061 / DSM 861 / OCM 144 / PS).